The following is a 149-amino-acid chain: Internal scaffolding protein ORF3 (149 aa).

The protein belongs to the microvidae B protein family.

Its subcellular location is the host cytoplasm. Functionally, participates in the assembly of the viral procapsid in the cytoplasm. Released from the procapsid upon genome packaging, possibly through affinity displacement by the protein ORF8, or by proteolysis. This chain is Internal scaffolding protein ORF3, found in Spiroplasma virus 4 (SpV4).